Here is a 103-residue protein sequence, read N- to C-terminus: Large ribosomal subunit protein bL21 (103 aa).

Belongs to the bacterial ribosomal protein bL21 family. In terms of assembly, part of the 50S ribosomal subunit. Contacts protein L20.

Functionally, this protein binds to 23S rRNA in the presence of protein L20. The sequence is that of Large ribosomal subunit protein bL21 from Azotobacter vinelandii (strain DJ / ATCC BAA-1303).